The following is a 283-amino-acid chain: Lysozyme-like protein 7 (283 aa).

The N-terminal stretch at 1 to 18 (MAHKSIVIFSVLAVLCHS) is a signal peptide. Residues 53–273 (YAYALDIYVQ…AVEEDGKIYA (221 aa)) enclose the Ch-type lysozyme domain.

It belongs to the glycosyl hydrolase 25 family. As to expression, expressed in intestine. Expressed in rectal gland cells and head neurons.

In terms of biological role, plays a role in resistance to Gram-positive bacteria B.thuringiensis and M.nematophilum and Gram-negative bacteria S.boydii or S.flexneri infection and to fungus C.neoformans infection. Plays a role in susceptibility to Gram-negative bacterium S.typhimurium infection. In Caenorhabditis elegans, this protein is Lysozyme-like protein 7.